The primary structure comprises 193 residues: Thymidine kinase (193 aa).

Residues Ser-9 to Ser-16 and Asp-87 to Gln-90 contribute to the ATP site. Glu-88 functions as the Proton acceptor in the catalytic mechanism. The Zn(2+) site is built by Cys-145, Cys-147, Cys-182, and His-185.

It belongs to the thymidine kinase family. As to quaternary structure, homotetramer.

The protein localises to the cytoplasm. It catalyses the reaction thymidine + ATP = dTMP + ADP + H(+). In Haemophilus influenzae (strain 86-028NP), this protein is Thymidine kinase.